The chain runs to 161 residues: UPF0178 protein BR1979/BS1330_I1973 (161 aa).

This sequence belongs to the UPF0178 family.

The chain is UPF0178 protein BR1979/BS1330_I1973 from Brucella suis biovar 1 (strain 1330).